Reading from the N-terminus, the 291-residue chain is N-acetylmannosamine kinase (291 aa).

ATP contacts are provided by residues 5–12 (AIDIGGTK) and 132–139 (GVGGGVVS). Histidine 156, cysteine 166, cysteine 168, and cysteine 173 together coordinate Zn(2+).

It belongs to the ROK (NagC/XylR) family. NanK subfamily. Homodimer.

The catalysed reaction is an N-acyl-D-mannosamine + ATP = an N-acyl-D-mannosamine 6-phosphate + ADP + H(+). The protein operates within amino-sugar metabolism; N-acetylneuraminate degradation; D-fructose 6-phosphate from N-acetylneuraminate: step 2/5. Its function is as follows. Catalyzes the phosphorylation of N-acetylmannosamine (ManNAc) to ManNAc-6-P. This chain is N-acetylmannosamine kinase, found in Escherichia coli (strain SMS-3-5 / SECEC).